A 245-amino-acid polypeptide reads, in one-letter code: Biosynthetic peptidoglycan transglycosylase (245 aa).

The chain crosses the membrane as a helical span at residues 20–42 (VYAGSVFAGAWLATQLFYLVQIA).

It belongs to the glycosyltransferase 51 family.

It is found in the cell inner membrane. The catalysed reaction is [GlcNAc-(1-&gt;4)-Mur2Ac(oyl-L-Ala-gamma-D-Glu-L-Lys-D-Ala-D-Ala)](n)-di-trans,octa-cis-undecaprenyl diphosphate + beta-D-GlcNAc-(1-&gt;4)-Mur2Ac(oyl-L-Ala-gamma-D-Glu-L-Lys-D-Ala-D-Ala)-di-trans,octa-cis-undecaprenyl diphosphate = [GlcNAc-(1-&gt;4)-Mur2Ac(oyl-L-Ala-gamma-D-Glu-L-Lys-D-Ala-D-Ala)](n+1)-di-trans,octa-cis-undecaprenyl diphosphate + di-trans,octa-cis-undecaprenyl diphosphate + H(+). The protein operates within cell wall biogenesis; peptidoglycan biosynthesis. Peptidoglycan polymerase that catalyzes glycan chain elongation from lipid-linked precursors. This chain is Biosynthetic peptidoglycan transglycosylase, found in Burkholderia ambifaria (strain MC40-6).